Reading from the N-terminus, the 366-residue chain is Isocitrate dehydrogenase [NAD] subunit alpha, mitochondrial (366 aa).

Residues Met1–Phe27 constitute a mitochondrion transit peptide. Lys77 is subject to N6-succinyllysine. Thr101 carries the phosphothreonine modification. Residues Arg115, Arg125, and Arg146 each contribute to the substrate site. Lys223 is subject to N6-acetyllysine. Positions 233, 257, and 261 each coordinate Mg(2+). Lys343 is modified (N6-acetyllysine; alternate). Lys343 is modified (N6-succinyllysine; alternate). Position 350 is an N6-succinyllysine (Lys350).

The protein belongs to the isocitrate and isopropylmalate dehydrogenases family. Heterooligomer of subunits alpha (IDH3A), beta (IDH3B), and gamma (IDH3G) in the apparent ratio of 2:1:1. The heterodimer containing one IDH3A and one IDH3B subunit and the heterodimer containing one IDH3A and one IDH3G subunit assemble into a heterotetramer (which contains two subunits of IDH3A, one of IDH3B and one of IDH3G) and further into the heterooctamer. Mg(2+) serves as cofactor. The cofactor is Mn(2+).

The protein resides in the mitochondrion. The enzyme catalyses D-threo-isocitrate + NAD(+) = 2-oxoglutarate + CO2 + NADH. Its activity is regulated as follows. The heterotetramer and the heterodimer composed of IDH3A and IDH3G subunits can be allosterically activated by citrate (CIT) or/and ADP, and the two activators can act independently or synergistically. The heterodimer composed of IDH3A and IDH3B subunits cannot be allosterically regulated and the allosteric regulation of the heterotetramer is through the IDH3G subunit and not the IDH3B subunit. The IDH3G subunit contains the allosteric site which consists of a CIT-binding site and an ADP-binding site, and the binding of CIT and ADP causes conformational changes at the allosteric site which are transmitted to the active site in the catalytic subunit (IDH3A) through a cascade of conformational changes at the heterodimer interface, leading to stabilization of the isocitrate-binding at the active site and thus activation of the enzyme. ATP can activate the heterotetramer and the heterodimer composed of IDH3A and IDH3G subunits at low concentrations but inhibits their activities at high concentrations, whereas ATP exhibits only inhibitory effect on the heterodimer composed of IDH3A and IDH3B subunits. Catalytic subunit of the enzyme which catalyzes the decarboxylation of isocitrate (ICT) into alpha-ketoglutarate. The heterodimer composed of the alpha (IDH3A) and beta (IDH3B) subunits and the heterodimer composed of the alpha (IDH3A) and gamma (IDH3G) subunits, have considerable basal activity but the full activity of the heterotetramer (containing two subunits of IDH3A, one of IDH3B and one of IDH3G) requires the assembly and cooperative function of both heterodimers. This chain is Isocitrate dehydrogenase [NAD] subunit alpha, mitochondrial, found in Bos taurus (Bovine).